The following is a 92-amino-acid chain: Small ribosomal subunit protein uS19c (92 aa).

Belongs to the universal ribosomal protein uS19 family.

It localises to the plastid. Its subcellular location is the chloroplast. Protein S19 forms a complex with S13 that binds strongly to the 16S ribosomal RNA. The polypeptide is Small ribosomal subunit protein uS19c (Dioscorea elephantipes (Elephant's foot yam)).